The sequence spans 474 residues: MKLFNTLTRQKEEFKPLVPGQVSMYVCGPTVYNYIHIGNARSAIAFDTIRRYFEYKGYKVNYVSNFTDVDDKMINEAGAEGTTVPELAERYIQAFLEDTRALNIEEATLHPRATHEIPAIIDFIQTLIDKGYAYEADGDVYYRTKKFADYGHLSDQNIDQLEEGASQHVNDEEQGRKEDPIDFALWKGQKAADEIAWDSPWGKGRPGWHIECSVMSTKYLGDTLDIHGGGQDLEFPHHENEIAQSEAKTGKKFVNYWLHNGFVTVGKDEEKMSKSLHNCVTVHDILKNVDPQVLRFFMASVQYRSQINYSEENLEQAANILGRFKNTLEGINYRLADATEGLPDPDLAKLVTETTAKFEAAMDDDFNVQNALTAIYEALPAVNSNANAEKADKESLRLFAKKLAAWLSVFGLDVDKLLAKEAGDDDAVIEELVAQRTEARKNKDWAKSDELRDQLKEMGVVLKDTPQGTRWSRE.

Cysteine 27 lines the Zn(2+) pocket. A 'HIGH' region motif is present at residues 29–39; sequence PTVYNYIHIGN. The Zn(2+) site is built by cysteine 212, histidine 237, and glutamate 241. Positions 271–275 match the 'KMSKS' region motif; that stretch reads KMSKS. Residue lysine 274 coordinates ATP.

This sequence belongs to the class-I aminoacyl-tRNA synthetase family. In terms of assembly, monomer. Zn(2+) is required as a cofactor.

Its subcellular location is the cytoplasm. The catalysed reaction is tRNA(Cys) + L-cysteine + ATP = L-cysteinyl-tRNA(Cys) + AMP + diphosphate. This Lactobacillus delbrueckii subsp. bulgaricus (strain ATCC 11842 / DSM 20081 / BCRC 10696 / JCM 1002 / NBRC 13953 / NCIMB 11778 / NCTC 12712 / WDCM 00102 / Lb 14) protein is Cysteine--tRNA ligase.